Reading from the N-terminus, the 320-residue chain is o-succinylbenzoate synthase (320 aa).

Catalysis depends on Lys-133, which acts as the Proton donor. Positions 161, 190, and 213 each coordinate Mg(2+). Catalysis depends on Lys-235, which acts as the Proton acceptor.

This sequence belongs to the mandelate racemase/muconate lactonizing enzyme family. MenC type 1 subfamily. The cofactor is a divalent metal cation.

The enzyme catalyses (1R,6R)-6-hydroxy-2-succinyl-cyclohexa-2,4-diene-1-carboxylate = 2-succinylbenzoate + H2O. It functions in the pathway quinol/quinone metabolism; 1,4-dihydroxy-2-naphthoate biosynthesis; 1,4-dihydroxy-2-naphthoate from chorismate: step 4/7. Its pathway is quinol/quinone metabolism; menaquinone biosynthesis. In terms of biological role, converts 2-succinyl-6-hydroxy-2,4-cyclohexadiene-1-carboxylate (SHCHC) to 2-succinylbenzoate (OSB). The polypeptide is o-succinylbenzoate synthase (Escherichia fergusonii (strain ATCC 35469 / DSM 13698 / CCUG 18766 / IAM 14443 / JCM 21226 / LMG 7866 / NBRC 102419 / NCTC 12128 / CDC 0568-73)).